Reading from the N-terminus, the 765-residue chain is Palmitoyltransferase ZDHHC8 (765 aa).

The Cytoplasmic segment spans residues 1-13; it reads MPRSPGTRLKPAK. Residues 14 to 34 traverse the membrane as a helical segment; it reads YIPVATAAALLVGSSTLFFVF. Over 35-52 the chain is Lumenal; the sequence is TCPWLTRAVSPAVPVYNG. A helical membrane pass occupies residues 53–73; it reads IIFLFVLANFSMATFMDPGVF. The Cytoplasmic portion of the chain corresponds to 74–148; the sequence is PRADEDEDKE…NCIGRRNYRY (75 aa). The 51-residue stretch at 104–154 folds into the DHHC domain; that stretch reads KWCATCHFYRPPRCSHCSVCDNCVEDFDHHCPWVNNCIGRRNYRYFFLFLL. The S-palmitoyl cysteine intermediate role is filled by cysteine 134. A helical membrane pass occupies residues 149-169; that stretch reads FFLFLLSLSAHMVGVVAFGLV. Topologically, residues 170–190 are lumenal; it reads YVLNHAEGLGAAHTTITMAVM. The chain crosses the membrane as a helical span at residues 191 to 211; sequence CVAGLFFIPVIGLTGFHVVLV. Topologically, residues 212–765 are cytoplasmic; sequence TRGRTTNEQV…VGGTTYEISV (554 aa). Positions 293 to 352 are disordered; sequence GLGRSKSKGSLDRLDEKPLDLGPPLPPKIEAGTFSSDLQTPRPGSAESALSVQRTSPPTP. The span at 301 to 311 shows a compositional bias: basic and acidic residues; sequence GSLDRLDEKPL. The residue at position 337 (serine 337) is a Phosphoserine. An Omega-N-methylarginine modification is found at arginine 441. Residues 509-540 form a disordered region; sequence LHPGATGDPPRPLPRSFSPVLGPRPREPSPVR. Serine 606, serine 627, serine 675, serine 682, serine 725, and serine 743 each carry phosphoserine. Residues 613–747 form a disordered region; it reads GPGFGGARNP…PGPSASPTRH (135 aa). Positions 622–653 are enriched in low complexity; that stretch reads PALQTSLSSLSSSVSRAPRTSSSSLQADQASS.

Belongs to the DHHC palmitoyltransferase family. ERF2/ZDHHC9 subfamily. In terms of tissue distribution, widely expressed.

The protein localises to the golgi apparatus membrane. It localises to the mitochondrion membrane. The catalysed reaction is L-cysteinyl-[protein] + hexadecanoyl-CoA = S-hexadecanoyl-L-cysteinyl-[protein] + CoA. Its function is as follows. Palmitoyltransferase that catalyzes the addition of palmitate onto various protein substrates and therefore functions in several unrelated biological processes. Through the palmitoylation of ABCA1 regulates the localization of the transporter to the plasma membrane and thereby regulates its function in cholesterol and phospholipid efflux. Could also pamitoylate the D(2) dopamine receptor DRD2 and regulate its stability and localization to the plasma membrane. Could also play a role in glutamatergic transmission. Functionally, (Microbial infection) Able to palmitoylate SARS coronavirus-2/SARS-CoV-2 spike protein following its synthesis in the endoplasmic reticulum (ER). In the infected cell, promotes spike biogenesis by protecting it from premature ER degradation, increases half-life and controls the lipid organization of its immediate membrane environment. Once the virus has formed, spike palmitoylation controls fusion with the target cell. The polypeptide is Palmitoyltransferase ZDHHC8 (Homo sapiens (Human)).